Here is a 162-residue protein sequence, read N- to C-terminus: Disulfide bond formation protein B (162 aa).

At 1–8 (MTPLFRKA) the chain is on the cytoplasmic side. The helical transmembrane segment at 9–25 (VWLLFAVSVCAFAGSLA) threads the bilayer. Residues 26–43 (AQYVLGMEPCVLCISQRL) lie on the Periplasmic side of the membrane. Residues Cys-35 and Cys-38 are joined by a disulfide bond. Residues 44–60 (CVLATALCTAIVLMCRP) traverse the membrane as a helical segment. Topologically, residues 61–67 (RRRAGGL) are cytoplasmic. The chain crosses the membrane as a helical span at residues 68-85 (FGAVFISIPAVTGISVAA). Residues 86–141 (YQLWLQSLPPGTAPSCGAPWTFRLKGWSLFDWFEPVVRGFGNCAEPDYLLGVALPV) lie on the Periplasmic side of the membrane. A disulfide bridge links Cys-101 with Cys-128. A helical membrane pass occupies residues 142–160 (WSAAYFLAVVLTVWWAWAR). Topologically, residues 161 to 162 (AK) are cytoplasmic.

The protein belongs to the DsbB family.

Its subcellular location is the cell inner membrane. Functionally, required for disulfide bond formation in some periplasmic proteins. Acts by oxidizing the DsbA protein. This is Disulfide bond formation protein B from Neisseria meningitidis serogroup C / serotype 2a (strain ATCC 700532 / DSM 15464 / FAM18).